The following is a 340-amino-acid chain: tRNA N6-adenosine threonylcarbamoyltransferase (340 aa).

The Fe cation site is built by His111 and His115. Substrate-binding positions include Val133–Gly137, Asp166, Gly179, Asp183, and Asn274. Residue Asp299 coordinates Fe cation.

The protein belongs to the KAE1 / TsaD family. Fe(2+) is required as a cofactor.

The protein resides in the cytoplasm. The enzyme catalyses L-threonylcarbamoyladenylate + adenosine(37) in tRNA = N(6)-L-threonylcarbamoyladenosine(37) in tRNA + AMP + H(+). Functionally, required for the formation of a threonylcarbamoyl group on adenosine at position 37 (t(6)A37) in tRNAs that read codons beginning with adenine. Is involved in the transfer of the threonylcarbamoyl moiety of threonylcarbamoyl-AMP (TC-AMP) to the N6 group of A37, together with TsaE and TsaB. TsaD likely plays a direct catalytic role in this reaction. The sequence is that of tRNA N6-adenosine threonylcarbamoyltransferase from Brachyspira hyodysenteriae (strain ATCC 49526 / WA1).